The primary structure comprises 234 residues: UPF0758 protein Rfer_3252 (234 aa).

The MPN domain occupies 112–234 (IFATPDAVKH…ALSMAERGLL (123 aa)). Zn(2+)-binding residues include H183, H185, and D196. The short motif at 183–196 (HNHPSGTVQPSRAD) is the JAMM motif element.

This sequence belongs to the UPF0758 family.

This is UPF0758 protein Rfer_3252 from Albidiferax ferrireducens (strain ATCC BAA-621 / DSM 15236 / T118) (Rhodoferax ferrireducens).